We begin with the raw amino-acid sequence, 309 residues long: Movement protein (309 aa).

A disordered region spans residues 245–273; it reads HLSLNESKTLPSTSTTEAEGSERRIHIGA. A compositionally biased stretch (polar residues) spans 246 to 262; it reads LSLNESKTLPSTSTTEA.

Its subcellular location is the host cell junction. It localises to the host plasmodesma. Its function is as follows. Transports viral genome to neighboring plant cells directly through plasmosdesmata, without any budding. The movement protein allows efficient cell to cell propagation, by bypassing the host cell wall barrier. Acts by forming a tubular structure at the host plasmodesmata, enlarging it enough to allow free passage of virion capsids. The sequence is that of Movement protein from Solanum lycopersicum (Tomato).